The sequence spans 224 residues: Oxaloacetate tautomerase FAHD2, mitochondrial (224 aa).

The N-terminal 30 residues, 1 to 30, are a transit peptide targeting the mitochondrion; it reads MATSMIQRLFKQGTKIVGVGLNYASHAKEL. Mg(2+)-binding residues include glutamate 67, glutamate 69, and aspartate 98.

It belongs to the FAH family. Mg(2+) is required as a cofactor. Requires Mn(2+) as cofactor.

Its subcellular location is the mitochondrion. The enzyme catalyses oxaloacetate = enol-oxaloacetate. Tautomerase that converts enol-oxaloacetate, a strong inhibitor of succinate dehydrogenase, to the physiological keto form of oxaloacetate. This is Oxaloacetate tautomerase FAHD2, mitochondrial from Arabidopsis thaliana (Mouse-ear cress).